The following is a 75-amino-acid chain: Small ribosomal subunit protein bS18 (75 aa).

Belongs to the bacterial ribosomal protein bS18 family. In terms of assembly, part of the 30S ribosomal subunit. Forms a tight heterodimer with protein bS6.

In terms of biological role, binds as a heterodimer with protein bS6 to the central domain of the 16S rRNA, where it helps stabilize the platform of the 30S subunit. The protein is Small ribosomal subunit protein bS18 of Buchnera aphidicola subsp. Cinara cedri (strain Cc).